The following is a 280-amino-acid chain: Probable endonuclease 4 (280 aa).

His-68, His-108, Glu-143, Asp-177, His-180, His-214, Asp-227, His-229, and Glu-259 together coordinate Zn(2+).

This sequence belongs to the AP endonuclease 2 family. It depends on Zn(2+) as a cofactor.

The enzyme catalyses Endonucleolytic cleavage to 5'-phosphooligonucleotide end-products.. In terms of biological role, endonuclease IV plays a role in DNA repair. It cleaves phosphodiester bonds at apurinic or apyrimidinic (AP) sites, generating a 3'-hydroxyl group and a 5'-terminal sugar phosphate. In Cenarchaeum symbiosum (strain A), this protein is Probable endonuclease 4.